Here is a 590-residue protein sequence, read N- to C-terminus: Putative sodium/calcium exchanger 6 (590 aa).

Residues 1-19 form the signal peptide; sequence MRIHFFAFLIILSLVGCDG. 11 helical membrane passes run 97–117, 139–159, 173–193, 208–228, 230–250, 368–388, 397–417, 440–460, 499–519, 535–555, and 568–588; these read IILI…VSSA, VAGV…GAIA, LGEL…VTIF, IAFY…YDHV, IWMP…VILS, PITL…IQVC, PGLW…VLFF, IAWI…LGVV, AAAI…PFTI, YRLL…AMFA, and LVFI…DILV.

This sequence belongs to the Ca(2+):cation antiporter (CaCA) (TC 2.A.19) family.

The protein resides in the membrane. This chain is Putative sodium/calcium exchanger 6 (ncx-6), found in Caenorhabditis elegans.